We begin with the raw amino-acid sequence, 513 residues long: MSFIKSLLLAAAAVASVSARRGPEPKYPPAAGTSSYCSYWVDYEGDKSCSRVLEDNVVVLKDFARWNPTVGADCSGIKAGNSYCVEAFGEPEPIEVTTTTRAATTTTQPTATTTTFANGIATPQPTQSGMVTNCNKFHWIAEGVSCSQVISFQKITLADFVKWNPSVKSDCSGMWAGVNVCVGVVGSSTDTAKPTTTAPSNGVVTPQPTQPSMVTNCNKFHWIAKGVTCQQVISYQKISLADFVKWNPSVLSDCSGMWAEVQVCVGVIGSTPTTLATTTTTAGNGVSTPLPTQPGMVTNCAKFHWVAKGVTCNQIYSFQKITLEQFVSYNPTVKSDCSGMQAEVQVCVGLIAGTTPTTTRPPTTTAPGNGVSTPQPTQPGMVTNCAKFHWVAKGVTCNQIYSFQKITLEQFVSFNPTVKSDCTGMQAEVNVCVGLIGGNPTPTQTGNGIATPTPIQPGMVSNCKKFHWIAQGVTCQQVISFQKITLADFVKWNTGVGSDCRTMWAETNVCVGV.

Positions 1–19 (MSFIKSLLLAAAAVASVSA) are cleaved as a signal peptide. 4 LysM domains span residues 38–85 (SYWV…SYCV), 136–182 (KFHW…NVCV), 219–265 (KFHW…QVCV), and 302–348 (KFHW…QVCV). Positions 357–367 (TTTRPPTTTAP) are enriched in low complexity. The interval 357 to 377 (TTTRPPTTTAPGNGVSTPQPT) is disordered. LysM domains are found at residues 387-433 (KFHW…NVCV) and 465-511 (KFHW…NVCV).

Belongs to the secreted LysM effector family.

Might have a role in sequestration of chitin oligosaccharides (breakdown products of fungal cell walls that are released during invasion and act as triggers of host immunity) to dampen host defense. Does not play an important role during host colonization. The sequence is that of Secreted LysM effector Vd6LysM from Verticillium dahliae (strain VdLs.17 / ATCC MYA-4575 / FGSC 10137) (Verticillium wilt).